A 164-amino-acid chain; its full sequence is Small ribosomal subunit protein uS9 (164 aa).

This sequence belongs to the universal ribosomal protein uS9 family.

The sequence is that of Small ribosomal subunit protein uS9 from Rickettsia bellii (strain OSU 85-389).